Reading from the N-terminus, the 347-residue chain is Uroporphyrinogen decarboxylase (347 aa).

Substrate contacts are provided by residues 24-28 (RQAGR), Asp74, Tyr145, Ser200, and His315.

The protein belongs to the uroporphyrinogen decarboxylase family. In terms of assembly, homodimer.

The protein resides in the cytoplasm. It catalyses the reaction uroporphyrinogen III + 4 H(+) = coproporphyrinogen III + 4 CO2. It participates in porphyrin-containing compound metabolism; protoporphyrin-IX biosynthesis; coproporphyrinogen-III from 5-aminolevulinate: step 4/4. Catalyzes the decarboxylation of four acetate groups of uroporphyrinogen-III to yield coproporphyrinogen-III. This is Uroporphyrinogen decarboxylase from Hydrogenobaculum sp. (strain Y04AAS1).